Consider the following 251-residue polypeptide: Triosephosphate isomerase (251 aa).

9 to 11 provides a ligand contact to substrate; that stretch reads NWK. The active-site Electrophile is the histidine 95. The active-site Proton acceptor is the glutamate 167. Substrate is bound by residues glycine 173, serine 212, and 233–234; that span reads GG.

The protein belongs to the triosephosphate isomerase family. Homodimer.

It is found in the cytoplasm. The catalysed reaction is D-glyceraldehyde 3-phosphate = dihydroxyacetone phosphate. The protein operates within carbohydrate biosynthesis; gluconeogenesis. It participates in carbohydrate degradation; glycolysis; D-glyceraldehyde 3-phosphate from glycerone phosphate: step 1/1. Functionally, involved in the gluconeogenesis. Catalyzes stereospecifically the conversion of dihydroxyacetone phosphate (DHAP) to D-glyceraldehyde-3-phosphate (G3P). The polypeptide is Triosephosphate isomerase (Pseudomonas putida (strain GB-1)).